A 355-amino-acid chain; its full sequence is UDP-3-O-acylglucosamine N-acyltransferase (355 aa).

Catalysis depends on His-248, which acts as the Proton acceptor.

It belongs to the transferase hexapeptide repeat family. LpxD subfamily. In terms of assembly, homotrimer.

The enzyme catalyses a UDP-3-O-[(3R)-3-hydroxyacyl]-alpha-D-glucosamine + a (3R)-hydroxyacyl-[ACP] = a UDP-2-N,3-O-bis[(3R)-3-hydroxyacyl]-alpha-D-glucosamine + holo-[ACP] + H(+). Its pathway is bacterial outer membrane biogenesis; LPS lipid A biosynthesis. In terms of biological role, catalyzes the N-acylation of UDP-3-O-acylglucosamine using 3-hydroxyacyl-ACP as the acyl donor. Is involved in the biosynthesis of lipid A, a phosphorylated glycolipid that anchors the lipopolysaccharide to the outer membrane of the cell. The protein is UDP-3-O-acylglucosamine N-acyltransferase of Syntrophobacter fumaroxidans (strain DSM 10017 / MPOB).